A 345-amino-acid chain; its full sequence is Serpentine receptor class beta-5 (345 aa).

The Extracellular portion of the chain corresponds to 1–22 (MAEINQTKCDLAFQISYHPIYR). An N-linked (GlcNAc...) asparagine glycan is attached at asparagine 5. A helical transmembrane segment spans residues 23–43 (LAQFWTLSVSLLAVPSLLYFL). Topologically, residues 44–57 (LKRVLLLPFHGNLK) are cytoplasmic. The helical transmembrane segment at 58–78 (CLLITYFSSIFLYALVLCFDF) threads the bilayer. The Extracellular portion of the chain corresponds to 79–103 (SYQCLIPFIVTTKCSLIIDQTLYKC). The helical transmembrane segment at 104 to 124 (GHMTSLFFLTTPMLLPFGFSI) threads the bilayer. The Cytoplasmic segment spans residues 125–142 (ERFVAVGMAYKYEKMRTL). A helical transmembrane segment spans residues 143–163 (LGPILCFILVAPNFVVFYFLF). Residues 164–189 (RDEQFTDSFISFLVLPNTPAVQFNNY) are Extracellular-facing. The helical transmembrane segment at 190–210 (LWFLLYAKIGNFCCNCVLLIF) threads the bilayer. At 211 to 241 (HKRFKNTYLKKKTSLSVRYALEEISNSSKFT) the chain is on the cytoplasmic side. Residues 242–262 (LILTFTHLVFFGAYTIGSILV) traverse the membrane as a helical segment. At 263-280 (RTLGESFFGNFLNFYVAR) the chain is on the extracellular side. A helical transmembrane segment spans residues 281 to 301 (GVNCAVPTYNLLIAFVGLISL). Residues 302-345 (RQLNSRRHAKILTKVLIRVTGQEGARNYDDIIMQQWNTVSNRTR) lie on the Cytoplasmic side of the membrane.

It belongs to the nematode receptor-like protein srb family. In terms of tissue distribution, expressed throughout the head.

The protein resides in the cell membrane. It is found in the perikaryon. The protein localises to the cell projection. It localises to the dendrite. Functionally, G-protein coupled receptor. Plays a role in the navigational capacity of sperm and promotes the targeting of sperm derived from males to the fertilization site in the uterus of hermaphrodites. This Caenorhabditis elegans protein is Serpentine receptor class beta-5.